Here is a 600-residue protein sequence, read N- to C-terminus: Aspartate--tRNA(Asp/Asn) ligase (600 aa).

Glutamate 187 provides a ligand contact to L-aspartate. Residues 211 to 214 (QIFK) form an aspartate region. 2 residues coordinate L-aspartate: arginine 233 and histidine 463. 233–235 (RDE) contributes to the ATP binding site. ATP is bound at residue glutamate 497. Arginine 504 contacts L-aspartate. 549 to 552 (GIDR) serves as a coordination point for ATP.

This sequence belongs to the class-II aminoacyl-tRNA synthetase family. Type 1 subfamily. Homodimer.

It is found in the cytoplasm. The catalysed reaction is tRNA(Asx) + L-aspartate + ATP = L-aspartyl-tRNA(Asx) + AMP + diphosphate. Its function is as follows. Aspartyl-tRNA synthetase with relaxed tRNA specificity since it is able to aspartylate not only its cognate tRNA(Asp) but also tRNA(Asn). Reaction proceeds in two steps: L-aspartate is first activated by ATP to form Asp-AMP and then transferred to the acceptor end of tRNA(Asp/Asn). The chain is Aspartate--tRNA(Asp/Asn) ligase from Wolbachia sp. subsp. Brugia malayi (strain TRS).